Reading from the N-terminus, the 624-residue chain is DNA mismatch repair protein MutL (624 aa).

It belongs to the DNA mismatch repair MutL/HexB family.

In terms of biological role, this protein is involved in the repair of mismatches in DNA. It is required for dam-dependent methyl-directed DNA mismatch repair. May act as a 'molecular matchmaker', a protein that promotes the formation of a stable complex between two or more DNA-binding proteins in an ATP-dependent manner without itself being part of a final effector complex. The chain is DNA mismatch repair protein MutL from Chlorobium phaeobacteroides (strain DSM 266 / SMG 266 / 2430).